We begin with the raw amino-acid sequence, 132 residues long: Small ribosomal subunit protein uS8 (132 aa).

It belongs to the universal ribosomal protein uS8 family. As to quaternary structure, part of the 30S ribosomal subunit. Contacts proteins S5 and S12.

In terms of biological role, one of the primary rRNA binding proteins, it binds directly to 16S rRNA central domain where it helps coordinate assembly of the platform of the 30S subunit. In Rhizobium etli (strain CIAT 652), this protein is Small ribosomal subunit protein uS8.